Reading from the N-terminus, the 336-residue chain is Protein SGT1 homolog (336 aa).

N-acetylalanine is present on Ala2. TPR repeat units follow at residues 11 to 44 (SQRL…NPDD), 45 to 78 (AQYY…NPNN), and 79 to 112 (CTAL…DSTD). A CS domain is found at 140 to 229 (QSKIKYDWYQ…PEAVRWEKLE (90 aa)). The residue at position 236 (Thr236) is a Phosphothreonine. The SGS domain maps to 247–336 (MYPSSSHYTR…PPDDMEWKQY (90 aa)). A Phosphoserine modification is found at Ser252. The residue at position 255 (Thr255) is a Phosphothreonine. Lys266 participates in a covalent cross-link: Glycyl lysine isopeptide (Lys-Gly) (interchain with G-Cter in SUMO1); alternate. Lys266 is covalently cross-linked (Glycyl lysine isopeptide (Lys-Gly) (interchain with G-Cter in SUMO2); alternate). The residue at position 302 (Ser302) is a Phosphoserine.

The protein belongs to the SGT1 family. As to quaternary structure, probably associates with SCF (SKP1-CUL1-F-box protein) complex through interaction with SKP1. Interacts with S100A6. Interacts with HSP90. In terms of processing, phosphorylated at Ser-252 and Ser-302, dephosphorylation promotes nuclear translocation, most likely due to disruption of the SUGT1-HSP90 complex.

It is found in the cytoplasm. It localises to the nucleus. Its function is as follows. May play a role in ubiquitination and subsequent proteasomal degradation of target proteins. The polypeptide is Protein SGT1 homolog (Mus musculus (Mouse)).